The following is a 151-amino-acid chain: Minor curlin subunit (151 aa).

An N-terminal signal peptide occupies residues 1-21 (MKNKLLFMMLTILGAPGIATA).

It belongs to the CsgA/CsgB family.

The protein resides in the fimbrium. Its function is as follows. Curlin is the structural subunit of the curli. Curli are coiled surface structures that assemble preferentially at growth temperatures below 37 degrees Celsius. Curli can bind to fibronectin. The minor subunit is the nucleation component of curlin monomers. This Salmonella typhi protein is Minor curlin subunit (csgB).